The following is a 233-amino-acid chain: Lipoprotein-releasing system ATP-binding protein LolD (233 aa).

Positions 6–233 constitute an ABC transporter domain; the sequence is LQCDNLCKRY…TAELSLMGAE (228 aa). 42–49 contacts ATP; the sequence is GSSGSGKS.

This sequence belongs to the ABC transporter superfamily. Lipoprotein translocase (TC 3.A.1.125) family. In terms of assembly, the complex is composed of two ATP-binding proteins (LolD) and two transmembrane proteins (LolC and LolE).

The protein localises to the cell inner membrane. Its function is as follows. Part of the ABC transporter complex LolCDE involved in the translocation of mature outer membrane-directed lipoproteins, from the inner membrane to the periplasmic chaperone, LolA. Responsible for the formation of the LolA-lipoprotein complex in an ATP-dependent manner. This chain is Lipoprotein-releasing system ATP-binding protein LolD, found in Shigella dysenteriae serotype 1 (strain Sd197).